Here is a 79-residue protein sequence, read N- to C-terminus: Polcalcin Bra r 1 (79 aa).

2 consecutive EF-hand domains span residues 1–36 and 39–71; these read MADAEHERIFKKFDTDGDGKISAAELEEALKKLGSV and DDVTRMMAKIDTDGDGNISFQEFTEFASANPGL. The Ca(2+) site is built by Asp14, Asp16, Asp18, Lys20, Glu25, Asp49, Asp51, Asp53, Asn55, and Glu60.

The sequence is that of Polcalcin Bra r 1 from Brassica campestris (Field mustard).